We begin with the raw amino-acid sequence, 86 residues long: Toxin TdNa7 (86 aa).

The first 20 residues, 1 to 20 (MTRFVLFLSCFFLIGMVVEC), serve as a signal peptide directing secretion. In terms of domain architecture, LCN-type CS-alpha/beta spans 21-83 (KDGYLMGPDG…TWERATNTCG (63 aa)). Disulfide bonds link cysteine 31-cysteine 82, cysteine 35-cysteine 57, cysteine 43-cysteine 63, and cysteine 47-cysteine 65. Lysine 84 carries the lysine amide modification.

Belongs to the long (4 C-C) scorpion toxin superfamily. Sodium channel inhibitor family. Beta subfamily. Expressed by the venom gland.

It localises to the secreted. Its function is as follows. Beta toxins bind voltage-independently at site-4 of sodium channels (Nav) and shift the voltage of activation toward more negative potentials thereby affecting sodium channel activation and promoting spontaneous and repetitive firing. This is Toxin TdNa7 from Tityus discrepans (Venezuelan scorpion).